Consider the following 149-residue polypeptide: FKBP-type 16 kDa peptidyl-prolyl cis-trans isomerase (149 aa).

One can recognise a PPIase FKBP-type domain in the interval Ser-2–Gly-72.

This sequence belongs to the FKBP-type PPIase family.

It catalyses the reaction [protein]-peptidylproline (omega=180) = [protein]-peptidylproline (omega=0). Its function is as follows. PPIases accelerate the folding of proteins. Substrate specificity carried out with 'Suc-Ala-Xaa-Pro-Phe-4-nitroanilide', where Xaa is the amino acid tested, was found to be Phe &gt; Leu &gt;&gt; Ile &gt; Lys = Ala &gt; Trp &gt; His &gt;&gt; Gln. This is FKBP-type 16 kDa peptidyl-prolyl cis-trans isomerase (fkpB) from Escherichia coli O6:H1 (strain CFT073 / ATCC 700928 / UPEC).